The sequence spans 247 residues: Disease resistance protein BAK6 (247 aa).

Residues M1–C24 form the signal peptide. N66, N104, and N113 each carry an N-linked (GlcNAc...) asparagine glycan. 6 LRR repeats span residues L90–L114, D116–I138, S139–N161, L162–I186, S188–L210, and V213–V237. N150 and N161 each carry an N-linked (GlcNAc...) asparagine glycan. N215 carries an N-linked (GlcNAc...) asparagine glycan.

Interacts with WAK17 isoform 1; the interaction is direct. As to quaternary structure, (Microbial infection) Interacts with G.zeae CFEM1; the interaction is direct. Interacts with G.zeae CFEMN1; the interaction is direct. Interacts with G.zeae CFEM5; the interaction is direct.

Contributes to activation of the hypersensitive response, a form of programmed cell death, upon fungal infection. May sense the presence of fungal material and relay the signal to WAK17 isoform 1. The chain is Disease resistance protein BAK6 from Zea mays (Maize).